A 356-amino-acid chain; its full sequence is NADH-quinone oxidoreductase subunit H (356 aa).

8 helical membrane-spanning segments follow: residues 18–38 (IVMV…IAYI), 87–107 (GVFL…WAVI), 120–140 (VGIL…IMGG), 166–186 (IGFV…SAIV), 202–222 (WLTF…VFYV), 257–277 (LFML…AILF), 292–312 (WVPG…LIAM), and 333–353 (FLPL…FAGI).

This sequence belongs to the complex I subunit 1 family. NDH-1 is composed of 14 different subunits. Subunits NuoA, H, J, K, L, M, N constitute the membrane sector of the complex.

It is found in the cell inner membrane. It catalyses the reaction a quinone + NADH + 5 H(+)(in) = a quinol + NAD(+) + 4 H(+)(out). In terms of biological role, NDH-1 shuttles electrons from NADH, via FMN and iron-sulfur (Fe-S) centers, to quinones in the respiratory chain. The immediate electron acceptor for the enzyme in this species is believed to be ubiquinone. Couples the redox reaction to proton translocation (for every two electrons transferred, four hydrogen ions are translocated across the cytoplasmic membrane), and thus conserves the redox energy in a proton gradient. This subunit may bind ubiquinone. The protein is NADH-quinone oxidoreductase subunit H of Nitrobacter winogradskyi (strain ATCC 25391 / DSM 10237 / CIP 104748 / NCIMB 11846 / Nb-255).